Reading from the N-terminus, the 578-residue chain is MLPCLVVLLAALLSLRLGSDAHGTELPSPPSVWFEAEFFHHILHWTPIPNQSESTCYEVALLRYGIESWNSISNCSQTLSYDLTAVTLDLYHSNGYRARVRAVDGSRHSNWTVTNTRFSVDEVTLTVGSVNLEIHNGFILGKIQLPRPKMAPANDTYESIFSHFREYEIAIRKVPGNFTFTHKKVKHENFSLLTSGEVGEFCVQVKPSVASRSNKGMWSKEECISLTRQYFTVTNVIIFFAFVLLLSGALAYCLALQLYVRRRKKLPSVLLFKKPSPFIFISQRPSPETQDTIHPLDEEAFLKVSPELKNLDLHGSTDSGFGSTKPSLQTEEPQFLLPDPHPQADRTLGNREPPVLGDSCSSGSSNSTDSGICLQEPSLSPSTGPTWEQQVGSNSRGQDDSGIDLVQNSEGRAGDTQGGSALGHHSPPEPEVPGEEDPAAVAFQGYLRQTRCAEEKATKTGCLEEESPLTDGLGPKFGRCLVDEAGLHPPALAKGYLKQDPLEMTLASSGAPTGQWNQPTEEWSLLALSSCSDLGISDWSFAHDLAPLGCVAAPGGLLGSFNSDLVTLPLISSLQSSE.

The N-terminal stretch at M1 to A21 is a signal peptide. Over H22–N235 the chain is Extracellular. N50, N74, N110, N154, N177, and N189 each carry an N-linked (GlcNAc...) asparagine glycan. C56 and C75 form a disulfide bridge. The cysteines at positions 202 and 223 are disulfide-linked. Residues V236–L256 form a helical membrane-spanning segment. The Cytoplasmic portion of the chain corresponds to Q257–E578. The segment at L313–E436 is disordered. The segment covering S316 to E332 has biased composition (polar residues). A BTRC recognition motif motif is present at residues D318–S323. The span at G357 to G371 shows a compositional bias: low complexity. A compositionally biased stretch (polar residues) spans P377–R396.

The protein belongs to the type II cytokine receptor family. Interacts with IL10. Interacts with IL10RB. Interacts (via its cytoplasmic domain) with JAK1 (via N-terminus). Interacts with BTRC; this interaction leads to IL10RA ubiquitination and subsequent degradation. Interacts with STAT3. As to quaternary structure, (Microbial infection) Interacts with human cytomegalovirus protein IL10. In terms of assembly, (Microbial infection) Interacts with Epstein-Barr virus protein IL10. Post-translationally, phosphorylated. Phosphorylation of the cytoplasmic tail induced STAT3 activation. In terms of processing, ubiquitinated by BTRC; ubiquitination leads to endocytosis and subsequent degradation of IL10RA. Primarily expressed in hematopoetic cells including B-cells, T-cells, NK cells, monocytes and macrophages. Not expressed in non-hematopoetic cells such as fibroblasts or endothelial cells.

The protein resides in the cell membrane. It localises to the cytoplasm. Its function is as follows. Cell surface receptor for the cytokine IL10 that participates in IL10-mediated anti-inflammatory functions, limiting excessive tissue disruption caused by inflammation. Upon binding to IL10, induces a conformational change in IL10RB, allowing IL10RB to bind IL10 as well. In turn, the heterotetrameric assembly complex, composed of two subunits of IL10RA and IL10RB, activates the kinases JAK1 and TYK2 that are constitutively associated with IL10RA and IL10RB respectively. These kinases then phosphorylate specific tyrosine residues in the intracellular domain in IL10RA leading to the recruitment and subsequent phosphorylation of STAT3. Once phosphorylated, STAT3 homodimerizes, translocates to the nucleus and activates the expression of anti-inflammatory genes. In addition, IL10RA-mediated activation of STAT3 inhibits starvation-induced autophagy. The chain is Interleukin-10 receptor subunit alpha (IL10RA) from Homo sapiens (Human).